Here is a 367-residue protein sequence, read N- to C-terminus: Phosphoribosylaminoimidazole-succinocarboxamide synthase (367 aa).

Belongs to the SAICAR synthetase family.

The catalysed reaction is 5-amino-1-(5-phospho-D-ribosyl)imidazole-4-carboxylate + L-aspartate + ATP = (2S)-2-[5-amino-1-(5-phospho-beta-D-ribosyl)imidazole-4-carboxamido]succinate + ADP + phosphate + 2 H(+). It functions in the pathway purine metabolism; IMP biosynthesis via de novo pathway; 5-amino-1-(5-phospho-D-ribosyl)imidazole-4-carboxamide from 5-amino-1-(5-phospho-D-ribosyl)imidazole-4-carboxylate: step 1/2. This is Phosphoribosylaminoimidazole-succinocarboxamide synthase from Shewanella baltica (strain OS155 / ATCC BAA-1091).